The following is a 132-amino-acid chain: Amicyanin (132 aa).

Positions M1–A26 are cleaved as a signal peptide. Q27 is modified (pyrrolidone carboxylic acid). The Plastocyanin-like domain occupies Q27–E132. 4 residues coordinate Cu cation: H80, C119, H122, and M125.

Cu cation serves as cofactor.

The protein localises to the periplasm. Its pathway is one-carbon metabolism; methylamine degradation. In terms of biological role, primary acceptor of electrons from methylamine dehydrogenase. Passes those electrons on either a soluble cytochrome c or to pseudoazurin. This Paracoccus versutus (Thiobacillus versutus) protein is Amicyanin (mauC).